The chain runs to 246 residues: 14-3-3 protein eta (246 aa).

Gly-2 carries the N-acetylglycine modification. 2 positions are modified to phosphoserine: Ser-25 and Ser-59.

This sequence belongs to the 14-3-3 family. In terms of assembly, homodimer. Interacts with many nuclear hormone receptors and cofactors including AR, ESR1, ESR2, MC2R, NR3C1, NRIP1, PPARBP and THRA. Interacts with ABL1 (phosphorylated form); the interaction retains it in the cytoplasm. Interacts with ARHGEF28 and CDK16. Weakly interacts with CDKN1B. Interacts with GAB2. Interacts with KCNK18 in a phosphorylation-dependent manner. Interacts with SAMSN1. Interacts with the 'Ser-241' phosphorylated form of PDPK1. Interacts with the 'Thr-369' phosphorylated form of DAPK2. Interacts with PI4KB, TBC1D22A and TBC1D22B. Interacts with SLITRK1. Interacts with MEFV. Phosphorylated on Ser-59 by protein kinase C delta type catalytic subunit in a sphingosine-dependent fashion. Expressed mainly in the brain and present in other tissues albeit at lower levels.

Its function is as follows. Adapter protein implicated in the regulation of a large spectrum of both general and specialized signaling pathways. Binds to a large number of partners, usually by recognition of a phosphoserine or phosphothreonine motif. Binding generally results in the modulation of the activity of the binding partner. Negatively regulates the kinase activity of PDPK1. In Homo sapiens (Human), this protein is 14-3-3 protein eta (YWHAH).